The chain runs to 87 residues: Large ribosomal subunit protein bL28 (87 aa).

The protein belongs to the bacterial ribosomal protein bL28 family.

This is Large ribosomal subunit protein bL28 from Methylacidiphilum infernorum (isolate V4) (Methylokorus infernorum (strain V4)).